Consider the following 448-residue polypeptide: Chaperone SurA (448 aa).

The first 27 residues, 1–27 (MKKTLRFAAVASGLVASLITVAPSASA), serve as a signal peptide directing secretion. PpiC domains are found at residues 185-288 (QQDL…RLVE) and 301-399 (IVQT…QVLG).

It localises to the periplasm. The catalysed reaction is [protein]-peptidylproline (omega=180) = [protein]-peptidylproline (omega=0). Chaperone involved in the correct folding and assembly of outer membrane proteins. Recognizes specific patterns of aromatic residues and the orientation of their side chains, which are found more frequently in integral outer membrane proteins. May act in both early periplasmic and late outer membrane-associated steps of protein maturation. This Burkholderia pseudomallei (strain 1710b) protein is Chaperone SurA.